Here is a 463-residue protein sequence, read N- to C-terminus: EPD1-interacting receptor-like cytoplasmic serine/threonine-protein kinase (463 aa).

The region spanning 91–383 (FSSANFLGKG…LTDIPIGPFV (293 aa)) is the Protein kinase domain. ATP is bound by residues 97–105 (LGKGGFGPV) and Lys126. Phosphotyrosine occurs at positions 171 and 173. Catalysis depends on Asp221, which acts as the Proton acceptor.

The protein belongs to the protein kinase superfamily. Ser/Thr protein kinase family. As to quaternary structure, interacts with the V.dahliae elicitor EPD1 (AC G2WWH6). Phosphorylated at Tyr-171 and Tyr-173 in the presence of pathogen-associated molecular patterns (PAMPs); this triggers the expression of pathogenesis-related genes.

The protein resides in the cell membrane. The catalysed reaction is L-seryl-[protein] + ATP = O-phospho-L-seryl-[protein] + ADP + H(+). It carries out the reaction L-threonyl-[protein] + ATP = O-phospho-L-threonyl-[protein] + ADP + H(+). In terms of biological role, required for pathogen-associated molecular pattern (PAMP, e.g. chitin and flg22)-triggered immunity (PTI) involving reactive oxygen species (ROS) accumulation and triggering plant defense, including defense-related gene expression (e.g. PR1 and LOX). Ensures specific recognition of the EPD1 effector of Verticillium dahliae, resulting in a hypersensitive response known as effector-triggered immunity (ETI), characterized by the activation of programmed cell death to limit infection by the pathogen. Priming plants with the incompatible pathogen V.dahliae leads to an increased resistance to both the broad-host-range filamentous pathogen Botrytis cinerea and the semibiotrophic pathogen Phytophthora capsici, as a result of systemic acquired resistance (SAR). The protein is EPD1-interacting receptor-like cytoplasmic serine/threonine-protein kinase of Nicotiana benthamiana.